We begin with the raw amino-acid sequence, 633 residues long: Extracellular metalloproteinase 3 (633 aa).

Residues methionine 1 to alanine 18 form the signal peptide. The propeptide occupies histidine 19–serine 246. N-linked (GlcNAc...) asparagine glycosylation occurs at asparagine 410. Residue histidine 429 coordinates Zn(2+). Glutamate 430 is a catalytic residue. Zn(2+) is bound at residue histidine 433. Residue asparagine 480 is glycosylated (N-linked (GlcNAc...) asparagine).

This sequence belongs to the peptidase M36 family. Zn(2+) serves as cofactor.

The protein localises to the secreted. In terms of biological role, secreted metalloproteinase probably acting as a virulence factor. This chain is Extracellular metalloproteinase 3 (MEP3), found in Arthroderma otae (Microsporum canis).